Here is a 367-residue protein sequence, read N- to C-terminus: Peptide chain release factor 2 (367 aa).

Position 254 is an N5-methylglutamine (Q254).

This sequence belongs to the prokaryotic/mitochondrial release factor family. Post-translationally, methylated by PrmC. Methylation increases the termination efficiency of RF2.

It is found in the cytoplasm. Peptide chain release factor 2 directs the termination of translation in response to the peptide chain termination codons UGA and UAA. In Burkholderia mallei (strain ATCC 23344), this protein is Peptide chain release factor 2.